The following is a 309-amino-acid chain: Pyridoxal 5'-phosphate synthase subunit PDX1.3 (309 aa).

Met-1 is subject to N-acetylmethionine. Asp-40 contributes to the D-ribose 5-phosphate binding site. Lys-97 serves as the catalytic Schiff-base intermediate with D-ribose 5-phosphate. Gly-169 contacts D-ribose 5-phosphate. A D-glyceraldehyde 3-phosphate-binding site is contributed by Arg-181. Residues Gly-230 and 251 to 252 (GS) each bind D-ribose 5-phosphate.

The protein belongs to the PdxS/SNZ family. Homodimer or heterodimer with PDX1.1 or PDX1.2. Interacts with PDX2. Expressed in cotyledons, rapidly dividing root stele tissues, stems, leaves, flowers, mature pollen, and siliques.

The protein localises to the cytoplasm. Its subcellular location is the cell membrane. It is found in the membrane. The enzyme catalyses aldehydo-D-ribose 5-phosphate + D-glyceraldehyde 3-phosphate + L-glutamine = pyridoxal 5'-phosphate + L-glutamate + phosphate + 3 H2O + H(+). It functions in the pathway cofactor biosynthesis; pyridoxal 5'-phosphate biosynthesis. Catalyzes the formation of pyridoxal 5'-phosphate from ribose 5-phosphate (RBP), glyceraldehyde 3-phosphate (G3P) and ammonia. The ammonia is provided by PDX2. Can also use ribulose 5-phosphate and dihydroxyacetone phosphate as substrates, resulting from enzyme-catalyzed isomerization of RBP and G3P, respectively. Also plays an indirect role in resistance to singlet oxygen-generating photosensitizers. The chain is Pyridoxal 5'-phosphate synthase subunit PDX1.3 (PDX13) from Arabidopsis thaliana (Mouse-ear cress).